Here is a 297-residue protein sequence, read N- to C-terminus: Large ribosomal subunit protein uL15m (297 aa).

The N-terminal 22 residues, 1–22, are a transit peptide targeting the mitochondrion; it reads MAGPVRGAAGPWALDLLRALPR. Residues 27–68 are disordered; sequence NLRPNPGSRKPERRRRGQRRGRKCGRGHKGERQRGTRPRLGF. Residues 37-53 are compositionally biased toward basic residues; it reads PERRRRGQRRGRKCGRG.

This sequence belongs to the universal ribosomal protein uL15 family. Component of the mitochondrial ribosome large subunit (39S) which comprises a 16S rRNA and about 50 distinct proteins.

Its subcellular location is the mitochondrion. The sequence is that of Large ribosomal subunit protein uL15m (MRPL15) from Bos taurus (Bovine).